Reading from the N-terminus, the 174-residue chain is Small ribosomal subunit protein uS5 (174 aa).

One can recognise an S5 DRBM domain in the interval 17-80; sequence WQERVVQIRR…ADGKKHLIDV (64 aa).

This sequence belongs to the universal ribosomal protein uS5 family. In terms of assembly, part of the 30S ribosomal subunit. Contacts proteins S4 and S8.

Its function is as follows. With S4 and S12 plays an important role in translational accuracy. In terms of biological role, located at the back of the 30S subunit body where it stabilizes the conformation of the head with respect to the body. This is Small ribosomal subunit protein uS5 from Thermosynechococcus vestitus (strain NIES-2133 / IAM M-273 / BP-1).